The sequence spans 343 residues: Ribosomal RNA small subunit methyltransferase C (343 aa).

It belongs to the methyltransferase superfamily. RsmC family. Monomer.

The protein localises to the cytoplasm. The enzyme catalyses guanosine(1207) in 16S rRNA + S-adenosyl-L-methionine = N(2)-methylguanosine(1207) in 16S rRNA + S-adenosyl-L-homocysteine + H(+). Functionally, specifically methylates the guanine in position 1207 of 16S rRNA in the 30S particle. The sequence is that of Ribosomal RNA small subunit methyltransferase C from Escherichia coli O7:K1 (strain IAI39 / ExPEC).